The primary structure comprises 542 residues: Probable protein kinase UbiB (542 aa).

The 383-residue stretch at 123–505 folds into the Protein kinase domain; it reads DFDEQALASA…ADNKTYNVKM (383 aa). ATP-binding positions include 129-137 and K156; that span reads LASASIAQV. Residue D291 is the Proton acceptor of the active site. A helical transmembrane segment spans residues 506–526; sequence IIMGSIILSLLWQFNSLPLWL.

The protein belongs to the ABC1 family. UbiB subfamily.

The protein localises to the cell inner membrane. It participates in cofactor biosynthesis; ubiquinone biosynthesis [regulation]. Functionally, is probably a protein kinase regulator of UbiI activity which is involved in aerobic coenzyme Q (ubiquinone) biosynthesis. This is Probable protein kinase UbiB from Haemophilus ducreyi (strain 35000HP / ATCC 700724).